The sequence spans 494 residues: BUB3-interacting and GLEBS motif-containing protein ZNF207 (494 aa).

The tract at residues 1–92 is microtubule-binding region; it reads MGRKKKKQLK…EGIPEKDMDE (92 aa). C2H2-type zinc fingers lie at residues 11-34 and 35-58; these read PWCW…KAKH and FKCH…MQVH. The segment covering 100 to 111 has biased composition (basic and acidic residues); it reads KTQESQKKKQQD. Disordered regions lie at residues 100–161, 250–377, and 455–494; these read KTQE…PGIP, NRPP…SATS, and LPGA…GGRY. The span at 112-121 shows a compositional bias: acidic residues; the sequence is DSDEYDDDDS. Positions 127 to 136 are enriched in polar residues; sequence FQPQPVQPQQ. Pro residues predominate over residues 142–161; the sequence is MAQPGLPPVPGAPGMPPGIP. A compositionally biased stretch (low complexity) spans 283 to 300; it reads SSSTASSNSESLSASSKA. A compositionally biased stretch (polar residues) spans 323-332; sequence LNSTPATSTE. Over residues 342–377 the composition is skewed to low complexity; that stretch reads TQSTASTTSTTNSTAAKPAASITSKPATLTTTSATS. The GLEBS stretch occupies residues 375-407; it reads ATSKLIHPDEDISLEERRAQLPKYQRNLPRPGQ. Positions 463-483 are enriched in pro residues; sequence GQGPPMVPPYQGGPPRPPMGM.

As to quaternary structure, interacts (via GLEBS region) with BUB3.

It is found in the nucleus. The protein resides in the chromosome. The protein localises to the centromere. It localises to the kinetochore. Its subcellular location is the cytoplasm. It is found in the cytoskeleton. The protein resides in the spindle. Functionally, kinetochore- and microtubule-binding protein that plays a key role in spindle assembly. ZNF207/BuGZ is mainly composed of disordered low-complexity regions and undergoes phase transition or coacervation to form temperature-dependent liquid droplets. Coacervation promotes microtubule bundling and concentrates tubulin, promoting microtubule polymerization and assembly of spindle and spindle matrix by concentrating its building blocks. Also acts as a regulator of mitotic chromosome alignment by mediating the stability and kinetochore loading of BUB3. Mechanisms by which BUB3 is protected are unclear: according to a first report, ZNF207/BuGZ may act by blocking ubiquitination and proteasomal degradation of BUB3. According to another report, the stabilization is independent of the proteasome. The protein is BUB3-interacting and GLEBS motif-containing protein ZNF207 of Pongo abelii (Sumatran orangutan).